Reading from the N-terminus, the 503-residue chain is ATP synthase subunit alpha (503 aa).

Gly-169–Thr-176 provides a ligand contact to ATP.

This sequence belongs to the ATPase alpha/beta chains family. As to quaternary structure, F-type ATPases have 2 components, CF(1) - the catalytic core - and CF(0) - the membrane proton channel. CF(1) has five subunits: alpha(3), beta(3), gamma(1), delta(1), epsilon(1). CF(0) has three main subunits: a(1), b(2) and c(9-12). The alpha and beta chains form an alternating ring which encloses part of the gamma chain. CF(1) is attached to CF(0) by a central stalk formed by the gamma and epsilon chains, while a peripheral stalk is formed by the delta and b chains.

It localises to the cell membrane. The enzyme catalyses ATP + H2O + 4 H(+)(in) = ADP + phosphate + 5 H(+)(out). Functionally, produces ATP from ADP in the presence of a proton gradient across the membrane. The alpha chain is a regulatory subunit. The sequence is that of ATP synthase subunit alpha from Dehalococcoides mccartyi (strain ATCC BAA-2266 / KCTC 15142 / 195) (Dehalococcoides ethenogenes (strain 195)).